Consider the following 361-residue polypeptide: Phosphoserine aminotransferase (361 aa).

Position 43 (Arg43) interacts with L-glutamate. Pyridoxal 5'-phosphate contacts are provided by residues 77–78 (AS), Trp103, Thr153, Asp173, and Gln196. N6-(pyridoxal phosphate)lysine is present on Lys197. 238-239 (NT) serves as a coordination point for pyridoxal 5'-phosphate.

Belongs to the class-V pyridoxal-phosphate-dependent aminotransferase family. SerC subfamily. As to quaternary structure, homodimer. Pyridoxal 5'-phosphate serves as cofactor.

Its subcellular location is the cytoplasm. It carries out the reaction O-phospho-L-serine + 2-oxoglutarate = 3-phosphooxypyruvate + L-glutamate. It catalyses the reaction 4-(phosphooxy)-L-threonine + 2-oxoglutarate = (R)-3-hydroxy-2-oxo-4-phosphooxybutanoate + L-glutamate. It functions in the pathway amino-acid biosynthesis; L-serine biosynthesis; L-serine from 3-phospho-D-glycerate: step 2/3. Its pathway is cofactor biosynthesis; pyridoxine 5'-phosphate biosynthesis; pyridoxine 5'-phosphate from D-erythrose 4-phosphate: step 3/5. In terms of biological role, catalyzes the reversible conversion of 3-phosphohydroxypyruvate to phosphoserine and of 3-hydroxy-2-oxo-4-phosphonooxybutanoate to phosphohydroxythreonine. The chain is Phosphoserine aminotransferase from Azotobacter vinelandii (strain DJ / ATCC BAA-1303).